We begin with the raw amino-acid sequence, 451 residues long: Eukaryotic translation initiation factor 3 subunit E (451 aa).

In terms of domain architecture, PCI spans 256-425; that stretch reads TDLFFSPAYI…GTVIMNHPPQ (170 aa).

This sequence belongs to the eIF-3 subunit E family. In terms of assembly, component of the eukaryotic translation initiation factor 3 (eIF-3) complex.

It localises to the cytoplasm. Its function is as follows. Component of the eukaryotic translation initiation factor 3 (eIF-3) complex, which is involved in protein synthesis of a specialized repertoire of mRNAs and, together with other initiation factors, stimulates binding of mRNA and methionyl-tRNAi to the 40S ribosome. The eIF-3 complex specifically targets and initiates translation of a subset of mRNAs involved in cell proliferation. This chain is Eukaryotic translation initiation factor 3 subunit E (int6), found in Aspergillus oryzae (strain ATCC 42149 / RIB 40) (Yellow koji mold).